A 143-amino-acid polypeptide reads, in one-letter code: 18.1 kDa class I heat shock protein (143 aa).

The region spanning 29–143 (ENSAFVSTRI…PEVKSIEISS (115 aa)) is the sHSP domain.

Belongs to the small heat shock protein (HSP20) family. As to quaternary structure, forms oligomeric structures.

It is found in the cytoplasm. This is 18.1 kDa class I heat shock protein (HSP18.1) from Medicago sativa (Alfalfa).